Here is a 210-residue protein sequence, read N- to C-terminus: Probable GTP-binding protein EngB (210 aa).

The region spanning 30 to 204 (QGYEVAFAGR…YRVLADWMEL (175 aa)) is the EngB-type G domain. GTP-binding positions include 38 to 45 (GRSNAGKS), 64 to 68 (GRTQL), 82 to 85 (DLPG), 149 to 152 (TKAD), and 182 to 185 (LFSA). S45 and T66 together coordinate Mg(2+).

The protein belongs to the TRAFAC class TrmE-Era-EngA-EngB-Septin-like GTPase superfamily. EngB GTPase family. The cofactor is Mg(2+).

Its function is as follows. Necessary for normal cell division and for the maintenance of normal septation. This Pseudomonas putida (strain ATCC 700007 / DSM 6899 / JCM 31910 / BCRC 17059 / LMG 24140 / F1) protein is Probable GTP-binding protein EngB.